The following is a 242-amino-acid chain: uncharacterized protein (242 aa).

In terms of domain architecture, HTH gntR-type spans 17-85; the sequence is QRVDERIATT…HGSGSVVRDP (69 aa). The H-T-H motif DNA-binding region spans 45–64; that stretch reads ERDLAERLGVNRTSLRQGLA.

This is an uncharacterized protein from Mycobacterium tuberculosis (strain ATCC 25618 / H37Rv).